The sequence spans 212 residues: Peptide methionine sulfoxide reductase MsrA (212 aa).

The active site involves C52.

The protein belongs to the MsrA Met sulfoxide reductase family.

The catalysed reaction is L-methionyl-[protein] + [thioredoxin]-disulfide + H2O = L-methionyl-(S)-S-oxide-[protein] + [thioredoxin]-dithiol. It carries out the reaction [thioredoxin]-disulfide + L-methionine + H2O = L-methionine (S)-S-oxide + [thioredoxin]-dithiol. In terms of biological role, has an important function as a repair enzyme for proteins that have been inactivated by oxidation. Catalyzes the reversible oxidation-reduction of methionine sulfoxide in proteins to methionine. The protein is Peptide methionine sulfoxide reductase MsrA of Yersinia pseudotuberculosis serotype O:1b (strain IP 31758).